We begin with the raw amino-acid sequence, 286 residues long: Polyamine aminopropyltransferase (286 aa).

In terms of domain architecture, PABS spans 5-238; the sequence is TMWHETLHDQ…GIMTFAWATD (234 aa). S-methyl-5'-thioadenosine is bound at residue Gln-33. 2 residues coordinate spermidine: His-64 and Asp-88. S-methyl-5'-thioadenosine-binding positions include Glu-108 and 140-141; that span reads DG. The Proton acceptor role is filled by Asp-158. 158–161 is a binding site for spermidine; it reads DCTD. S-methyl-5'-thioadenosine is bound at residue Pro-165.

Belongs to the spermidine/spermine synthase family. As to quaternary structure, homodimer or homotetramer.

The protein resides in the cytoplasm. It catalyses the reaction S-adenosyl 3-(methylsulfanyl)propylamine + putrescine = S-methyl-5'-thioadenosine + spermidine + H(+). It functions in the pathway amine and polyamine biosynthesis; spermidine biosynthesis; spermidine from putrescine: step 1/1. In terms of biological role, catalyzes the irreversible transfer of a propylamine group from the amino donor S-adenosylmethioninamine (decarboxy-AdoMet) to putrescine (1,4-diaminobutane) to yield spermidine. The sequence is that of Polyamine aminopropyltransferase from Salmonella arizonae (strain ATCC BAA-731 / CDC346-86 / RSK2980).